A 220-amino-acid polypeptide reads, in one-letter code: MKRSASDSPLLFDLPLAPDFSQEQQLMKRGLKHIAGIDEAGRGPLAGPVVAAAVVLDQNDLPEGLDDSKRLTAARREALYEIILTKAITVSVASLSARSIDASDIRKAALEAMRRAVIGLTLKPCHALVDGRDVPPGLPCPGSALVKGDQRSVSIAAASIVAKVTRDRMMIRAGAAHPPYGLEIHAGYATQKHRAAIESEGPVPGLHRYTFAPIKGRFDC.

The 189-residue stretch at 32 to 220 (KHIAGIDEAG…FAPIKGRFDC (189 aa)) folds into the RNase H type-2 domain. The a divalent metal cation site is built by Asp38, Glu39, and Asp130.

Belongs to the RNase HII family. Mn(2+) is required as a cofactor. The cofactor is Mg(2+).

The protein resides in the cytoplasm. The enzyme catalyses Endonucleolytic cleavage to 5'-phosphomonoester.. Functionally, endonuclease that specifically degrades the RNA of RNA-DNA hybrids. The protein is Ribonuclease HII of Brucella canis (strain ATCC 23365 / NCTC 10854 / RM-666).